Reading from the N-terminus, the 607-residue chain is Developmental gene 1062 protein (607 aa).

3 disordered regions span residues 62 to 84 (LQGQ…HNNQ), 334 to 451 (ICDD…SNFQ), and 568 to 602 (DNNT…NDLL). The segment covering 334-363 (ICDDSSNSSTPSLSSYSNGNNKYNNNNNDS) has biased composition (low complexity). Residues 364 to 382 (SESDESDDDDNNDDDDNDS) are compositionally biased toward acidic residues. Composition is skewed to low complexity over residues 383–451 (IDFN…SNFQ) and 568–582 (DNNT…ISVN).

The protein is Developmental gene 1062 protein (DG1062) of Dictyostelium discoideum (Social amoeba).